The chain runs to 430 residues: MSLGQRLALLAIRLQEPQRVASFQRLCGVEVPLGSPKAGEDAETEVRGAPGDPRRRPRQSGADGSPAKPDCCGAPNGVRNGLAAEPGPTGPRRAGSLRRNSLTGEEGELAKVSNLPLYYLFCFGTELGNELFYIIFFPFWIWNLDPFVGRRLVIIWVLVMYLGQCTKDIIRWPRPASPPVIKLEIFYNSEYSMPSTHAMSGTAIPIAMILLTYGRWQYPLIYGLILIPCWSSLVCLSRIYMGMHSILDVIAGFLYTILILIIFYPLVDLIDNFNQTYKYAPLIIIGLHLILGIFSFTLDTWSTSRGDTAEILGSGAGIACGSHAAYNLGISLDPSLHTLPLAIPPLTVTLFGKAILRVVIGMLLVLFVRDIMKKVTIPLACKLFGIPCHDLRQARQHMEVELPYRYITYGTVGFSITFLIPYIFSFIGIS.

Residues 34 to 100 form a disordered region; the sequence is GSPKAGEDAE…PRRAGSLRRN (67 aa). Residue S101 is modified to Phosphoserine. T103 bears the Phosphothreonine mark. 4 helical membrane passes run 121–141, 152–172, 193–213, and 216–236; these read FCFG…PFWI, LVII…IIRW, MPST…LLTY, and WQYP…LVCL. The segment at 167-175 is phosphatase sequence motif I; the sequence is KDIIRWPRP. A phosphatase sequence motif II region spans residues 194–197; the sequence is PSTH. H197 acts as the Proton donor in catalysis. Residues 237–248 form a phosphatase sequence motif III region; sequence SRIYMGMHSILD. The Nucleophile role is filled by H244. The next 5 membrane-spanning stretches (helical) occupy residues 246-266, 279-299, 311-331, 348-368, and 409-429; these read ILDV…FYPL, YAPL…FTLD, ILGS…LGIS, VTLF…VLFV, and YGTV…FIGI.

This sequence belongs to the type 2 lipid phosphate phosphatase family.

Its subcellular location is the endoplasmic reticulum membrane. The protein resides in the cell membrane. It catalyses the reaction sphinganine 1-phosphate + H2O = sphinganine + phosphate. It carries out the reaction sphing-4-enine 1-phosphate + H2O = sphing-4-enine + phosphate. Specifically dephosphorylates sphingosine 1-phosphate (S1P), dihydro-S1P, and phyto-S1P. Does not act on ceramide 1-phosphate, lysophosphatidic acid or phosphatidic acid. Sphingosine-1-phosphate phosphatase activity is needed for efficient recycling of sphingosine into the sphingolipid synthesis pathway. Regulates the intracellular levels of the bioactive sphingolipid metabolite S1P that regulates diverse biological processes acting both as an extracellular receptor ligand or as an intracellular second messenger. Involved in efficient ceramide synthesis from exogenous sphingoid bases. Converts S1P to sphingosine, which is readily metabolized to ceramide via ceramide synthase. In concert with sphingosine kinase 2 (SphK2), recycles sphingosine into ceramide through a phosphorylation/dephosphorylation cycle. Regulates endoplasmic-to-Golgi trafficking of ceramides, resulting in the regulation of ceramide levels in the endoplasmic reticulum, preferentially long-chain ceramide species, and influences the anterograde membrane transport of both ceramide and proteins from the endoplasmic reticulum to the Golgi apparatus. The modulation of intracellular ceramide levels in turn regulates apoptosis. Via S1P levels, modulates resting tone, intracellular Ca(2+) and myogenic vasoconstriction in resistance arteries. Also involved in unfolded protein response (UPR) and ER stress-induced autophagy via regulation of intracellular S1P levels. Involved in the regulation of epidermal homeostasis and keratinocyte differentiation. This is Sphingosine-1-phosphate phosphatase 1 from Rattus norvegicus (Rat).